Consider the following 510-residue polypeptide: MRILIIIILIIIVFLVKDTIKKNKKVNSKSPCGPFAFPILGNIIQYFFYQILNIKEHSMIERYSRKYDGITRIWFGDIFILYVSNYEIVKCFQKEENFFDRPSTFVPTWRYMSSNGGGIMSSNDEKWKRAKTTFLKSLKIHGKKYLIEKKSIEFVNSIEKFSNSNQVFYPKQYSQGFTSSIFFKYMFNEDISIDNKFLKEIGTAVGMVFTKNSHLTVFDCFGILSPFYDLFFKFRLRPIEILKKTIDKQLTNHLNSMDSKMGDHQSRDIMDDLLIEYGSLNEISNQDRIQINQICFDVMSTDIGTVATTIDWVLLQLCNRQDLQEIICNEIQDTIKIKRNNVINDGGGGADTDNLFINLCDKQSIPYLIAFIKETMRVFSNGWSLPKTSKHDQICANYFIPKGSILFINYFSIHLNEEFFKNPREFNPARYLDDSIPIPDLHFGIGQRGCPGRFVAMDQVFLCIANTLLKYKIKSIDGKKIDDTIQFSVYLKPKDFGILLEKRNKLFVND.

A helical membrane pass occupies residues 1–21; that stretch reads MRILIIIILIIIVFLVKDTIK. Cysteine 450 provides a ligand contact to heme.

It belongs to the cytochrome P450 family. The cofactor is heme.

The protein localises to the membrane. In Dictyostelium discoideum (Social amoeba), this protein is Probable cytochrome P450 517A2 (cyp517A2).